The following is a 319-amino-acid chain: MSTDISPPYSQTHVEPVNGYPSDNKRCDDSSVPAKYDDLVRNSALFWEKLRAFLGLTSKTLKVPTVGGNTLDLHRLFIEVTSRGGIERVVKDRKWKEVIGAFSFPTTITSASFVLRKYYLKFLFQLEHVYYLEKPVSSLQSTDEALKSLANESPNPEEGIDEPQVGYEVQGFIDGKFDSGYLVTMKLGSQELKGVLYHIPQTPSQSQQTMETPSAIVQSSQRRHRKKSKLAVVDTQKPKCHRSGYNFFFAEQYARLKPEYHGQERSITKKIGHMWSNLTESEKQVYQDKGVKDVERYRIEMLEYKSSHESGATASTVAQ.

Residues 1–13 are compositionally biased toward polar residues; sequence MSTDISPPYSQTH. The disordered stretch occupies residues 1-25; it reads MSTDISPPYSQTHVEPVNGYPSDNK. The region spanning 40 to 131 is the ARID domain; that stretch reads VRNSALFWEK…FLFQLEHVYY (92 aa). Residues 203–220 show a composition bias toward polar residues; the sequence is PSQSQQTMETPSAIVQSS. Positions 203-230 are disordered; it reads PSQSQQTMETPSAIVQSSQRRHRKKSKL. A DNA-binding region (HMG box) is located at residues 238 to 305; the sequence is PKCHRSGYNF…RYRIEMLEYK (68 aa).

In terms of tissue distribution, ubiquitously expressed.

Its subcellular location is the nucleus. In terms of biological role, binds preferentially DNA with A/T-rich content. The chain is High mobility group B protein 10 (HMGB10) from Arabidopsis thaliana (Mouse-ear cress).